Consider the following 199-residue polypeptide: Sulfocyanin (199 aa).

The chain crosses the membrane as a helical; Signal-anchor for type II membrane protein span at residues 7–27 (VLPVVVGILVVIIAVAVGVYV). In terms of domain architecture, Plastocyanin-like spans 79–188 (NFNGTSSGSL…SGMWAVLVAS (110 aa)). Cu cation is bound by residues His-110, Cys-171, His-176, and Met-181.

Belongs to the multicopper oxidase family.

Its subcellular location is the cell membrane. The 4 redox proteins SoxE, SoxF, SoxG and SoxH probably form part of a membrane respiratory complex together with SoxM, a catalytic subunit of cytochrome oxidase. This chain is Sulfocyanin (soxE), found in Sulfolobus acidocaldarius (strain ATCC 33909 / DSM 639 / JCM 8929 / NBRC 15157 / NCIMB 11770).